A 24-amino-acid chain; its full sequence is Snake venom metalloproteinase Batx-1 (24 aa).

One can recognise a Peptidase M12B domain in the interval 1 to 24 (YIELAVVADHGIFTKYNSNLNTIR). Glutamate 3 lines the Ca(2+) pocket.

Belongs to the venom metalloproteinase (M12B) family. P-I subfamily. As to quaternary structure, monomer. Zn(2+) is required as a cofactor. In terms of processing, the N-terminus is blocked. Post-translationally, contains 3 disulfide bonds. Expressed by the venom gland.

The protein resides in the secreted. With respect to regulation, inhibited by EDTA, and o-phenanthroline, but not inhibited by PMSF, pepstatin A, and aprotinin. In terms of biological role, zinc metalloproteinase that exhits a weak hemorrhagic activity. Degrades preferentially the Aalpha- (FGA) and Bbeta-chains (FGB) of fibrinogen, and partially degrades gamma-chain (FGG) at higher concentration. Induces a mild myotoxicity, but lacks coagulant activity on human plasma or bovin fibrinogen and defibrinating activity. This Bothrops atrox (Barba amarilla) protein is Snake venom metalloproteinase Batx-1.